A 127-amino-acid polypeptide reads, in one-letter code: Small ribosomal subunit protein uS11 (127 aa).

This sequence belongs to the universal ribosomal protein uS11 family. In terms of assembly, part of the 30S ribosomal subunit. Interacts with proteins S7 and S18. Binds to IF-3.

In terms of biological role, located on the platform of the 30S subunit, it bridges several disparate RNA helices of the 16S rRNA. Forms part of the Shine-Dalgarno cleft in the 70S ribosome. In Streptococcus agalactiae serotype Ia (strain ATCC 27591 / A909 / CDC SS700), this protein is Small ribosomal subunit protein uS11.